The following is a 252-amino-acid chain: Chitooligosaccharide deacetylase (252 aa).

Mg(2+) is bound by residues H61 and H125.

This sequence belongs to the YdjC deacetylase family. ChbG subfamily. As to quaternary structure, homodimer. The cofactor is Mg(2+).

Its subcellular location is the cytoplasm. The enzyme catalyses N,N'-diacetylchitobiose + H2O = N-acetyl-beta-D-glucosaminyl-(1-&gt;4)-D-glucosamine + acetate. It catalyses the reaction diacetylchitobiose-6'-phosphate + H2O = N'-monoacetylchitobiose-6'-phosphate + acetate. It participates in glycan degradation; chitin degradation. In terms of biological role, involved in the degradation of chitin. ChbG is essential for growth on the acetylated chitooligosaccharides chitobiose and chitotriose but is dispensable for growth on cellobiose and chitosan dimer, the deacetylated form of chitobiose. Deacetylation of chitobiose-6-P and chitotriose-6-P is necessary for both the activation of the chb promoter by the regulatory protein ChbR and the hydrolysis of phosphorylated beta-glucosides by the phospho-beta-glucosidase ChbF. Catalyzes the removal of only one acetyl group from chitobiose-6-P to yield monoacetylchitobiose-6-P, the inducer of ChbR and the substrate of ChbF. The protein is Chitooligosaccharide deacetylase of Escherichia coli O45:K1 (strain S88 / ExPEC).